A 220-amino-acid polypeptide reads, in one-letter code: Large ribosomal subunit protein uL1 (220 aa).

It belongs to the universal ribosomal protein uL1 family. In terms of assembly, part of the 50S ribosomal subunit.

In terms of biological role, binds directly to 23S rRNA. The L1 stalk is quite mobile in the ribosome, and is involved in E site tRNA release. Functionally, protein L1 is also a translational repressor protein, it controls the translation of the L11 operon by binding to its mRNA. The sequence is that of Large ribosomal subunit protein uL1 from Ehrlichia ruminantium (strain Gardel).